The following is a 220-amino-acid chain: Ras-related protein Rab-3A (220 aa).

Residues serine 31, serine 32, valine 33, glycine 34, lysine 35, threonine 36, serine 37, threonine 48, proline 49, serine 53, and threonine 54 each contribute to the GTP site. Position 36 (threonine 36) interacts with Mg(2+). The Switch 1 signature appears at 49 to 58 (PAFVSTVGID). Residues threonine 54 and aspartate 77 each coordinate Mg(2+). Glycine 80 contributes to the GTP binding site. Residues 80 to 96 (GQERYRTITTAYYRGAM) carry the Switch 2 motif. Residue threonine 86 is modified to Phosphothreonine. GTP-binding residues include asparagine 135, lysine 136, aspartate 138, alanine 166, and lysine 167. Serine 188 and serine 190 each carry phosphoserine. A disordered region spans residues 194–220 (ADPAVTGAKQGPQLTDQQAPPHQDCAC). S-geranylgeranyl cysteine attachment occurs at residues cysteine 218 and cysteine 220. Cysteine 220 is subject to Cysteine methyl ester.

The protein belongs to the small GTPase superfamily. Rab family. As to quaternary structure, interacts with RIMS1 and RIMS2. Interacts with Rabphilin-3A/RPH3A and Rab effector Noc2/RPH3AL. Interacts with SYTL4. Interacts with RAB3IP. Interacts with SGSM1 and SGSM3. Interacts with SYT1. Interacts with MYH9; this interaction is essential for lysosome exocytosis and plasma membrane repair. Interacts with STXBP1; this interaction promotes RAB3A dissociation from the vesicle membrane. Interacts with SNCA. Interacts with GDI1, GDI2, CHM and CHML; phosphorylation at Thr-86 disrupts these interactions. Interacts with MADD (via uDENN domain); the GTP-bound form is preferred for interaction. Mg(2+) serves as cofactor. Phosphorylation of Thr-86 in the switch II region by LRRK2 prevents the association of RAB regulatory proteins, including CHM, CHML and RAB GDP dissociation inhibitors GDI1 and GDI2.

The protein localises to the cytoplasm. It localises to the cytosol. It is found in the lysosome. Its subcellular location is the cytoplasmic vesicle. The protein resides in the secretory vesicle. The protein localises to the cell projection. It localises to the axon. It is found in the cell membrane. Its subcellular location is the presynapse. The protein resides in the postsynapse. It carries out the reaction GTP + H2O = GDP + phosphate + H(+). Regulated by guanine nucleotide exchange factors (GEFs) including RAB3IL1 and MADD which promote the exchange of bound GDP for free GTP. Regulated by GTPase activating proteins (GAPs) including RAB3GAP1 and TBC1D10B which increase the GTP hydrolysis activity. Inhibited by GDP dissociation inhibitors (GDIs) which prevent Rab-GDP dissociation. Its function is as follows. The small GTPases Rab are key regulators of intracellular membrane trafficking, from the formation of transport vesicles to their fusion with membranes. Rabs cycle between an inactive GDP-bound form and an active GTP-bound form that is able to recruit to membranes different sets of downstream effectors directly responsible for vesicle formation, movement, tethering and fusion. RAB3A plays a central role in regulated exocytosis and secretion. Controls the recruitment, tethering and docking of secretory vesicles to the plasma membrane. Upon stimulation, switches to its active GTP-bound form, cycles to vesicles and recruits effectors such as RIMS1, RIMS2, Rabphilin-3A/RPH3A, RPH3AL or SYTL4 to help the docking of vesicules onto the plasma membrane. Upon GTP hydrolysis by GTPase-activating protein, dissociates from the vesicle membrane allowing the exocytosis to proceed. Stimulates insulin secretion through interaction with RIMS2 or RPH3AL effectors in pancreatic beta cells. Regulates calcium-dependent lysosome exocytosis and plasma membrane repair (PMR) via the interaction with 2 effectors, SYTL4 and myosin-9/MYH9. Acts as a positive regulator of acrosome content secretion in sperm cells by interacting with RIMS1. Also plays a role in the regulation of dopamine release by interacting with synaptotagmin I/SYT. The chain is Ras-related protein Rab-3A (RAB3A) from Sus scrofa (Pig).